A 237-amino-acid chain; its full sequence is Probable S-methyl-5'-thioinosine phosphorylase (237 aa).

Residues Thr-12 and 54-55 each bind phosphate; that span reads RH. Position 187 (Met-187) interacts with substrate. Thr-188 contacts phosphate. 211 to 213 contacts substrate; sequence NWA.

It belongs to the PNP/MTAP phosphorylase family. MTAP subfamily. Homotrimer.

It carries out the reaction S-methyl-5'-thioinosine + phosphate = 5-(methylsulfanyl)-alpha-D-ribose 1-phosphate + hypoxanthine. It participates in purine metabolism; purine nucleoside salvage. Functionally, catalyzes the reversible phosphorylation of S-methyl-5'-thioinosine (MTI) to hypoxanthine and 5-methylthioribose-1-phosphate. Involved in the breakdown of S-methyl-5'-thioadenosine (MTA), a major by-product of polyamine biosynthesis. Catabolism of (MTA) occurs via deamination to MTI and phosphorolysis to hypoxanthine. In Xylella fastidiosa (strain 9a5c), this protein is Probable S-methyl-5'-thioinosine phosphorylase.